A 153-amino-acid chain; its full sequence is UPF0756 membrane protein Pjdr2_2290 (153 aa).

Helical transmembrane passes span 6–26 (LILVGLIVIGLIGRSPIIATA), 50–70 (LELGLLFLTLSVLVPFASGKV), 75–95 (LIAAFNTWPGWLALIGGAVAA), 111–131 (MVVGLVIGSIFGIIFLRGIPV), and 132–152 (GPLMAAGITAILYKLFKLMSG).

Belongs to the UPF0756 family.

The protein localises to the cell membrane. This Paenibacillus sp. (strain JDR-2) protein is UPF0756 membrane protein Pjdr2_2290.